The primary structure comprises 335 residues: MGPLSAPPCTQHITWKGLLLTASLLNFWNLPITAQVTIEALPPKVSEGKDVLLLVHNLPQNLAGYIWYKGQLMDLYHYITSYVVDGQINIYGPAYTGRETVYSNASLLIQNVTREDAGSYTLHIIKRGDRTRGVTGYFTFNLYLKLPKPYITINNSKPRENKDVLAFTCEPKSENYTYIWWLNGQSLPVSPRVKRPIENRILILPSVTRNETGPYECEIRDRDGGMRSDPVTLNVLYGPDLPSIYPSFTYYRSGENLYLSCFAESNPPAEYFWTINGKFQQSGQKLSIPQITTKHRGLYTCSVRNSATGKESSKSMTVEVSAPSGIGRLPLLNPI.

A signal peptide spans 1–34; sequence MGPLSAPPCTQHITWKGLLLTASLLNFWNLPITA. The Ig-like V-type domain maps to 35 to 144; it reads QVTIEALPPK…TGYFTFNLYL (110 aa). Asn-104 and Asn-111 each carry an N-linked (GlcNAc...) asparagine glycan. Residues 127 to 129 carry the Cell attachment site motif; it reads RGD. 2 consecutive Ig-like C2-type domains span residues 147–234 and 239–317; these read PKPY…VTLN and PDLP…KSMT. 2 cysteine pairs are disulfide-bonded: Cys-169–Cys-217 and Cys-261–Cys-301. Asn-175 and Asn-210 each carry an N-linked (GlcNAc...) asparagine glycan.

Belongs to the immunoglobulin superfamily. CEA family. In terms of tissue distribution, synthesized by syncytiotrophoblast of the placenta.

Its subcellular location is the secreted. This Homo sapiens (Human) protein is Pregnancy-specific beta-1-glycoprotein 5 (PSG5).